Here is a 245-residue protein sequence, read N- to C-terminus: Eukaryotic translation initiation factor 3 subunit K (245 aa).

The PCI domain occupies Tyr46–Asn227.

The protein belongs to the eIF-3 subunit K family. In terms of assembly, component of the eukaryotic translation initiation factor 3 (eIF-3) complex.

The protein resides in the cytoplasm. Component of the eukaryotic translation initiation factor 3 (eIF-3) complex, which is involved in protein synthesis of a specialized repertoire of mRNAs and, together with other initiation factors, stimulates binding of mRNA and methionyl-tRNAi to the 40S ribosome. The eIF-3 complex specifically targets and initiates translation of a subset of mRNAs involved in cell proliferation. The polypeptide is Eukaryotic translation initiation factor 3 subunit K (Sclerotinia sclerotiorum (strain ATCC 18683 / 1980 / Ss-1) (White mold)).